The primary structure comprises 379 residues: UPF0450 protein C17orf58 homolog (379 aa).

Residues 1–17 form the signal peptide; it reads MIPALTVPLLFLCATSA. 2 disordered regions span residues 76-95 and 162-194; these read RTRATHPQRQGQDLALPDKT and TASQNLQGRKYSRNNDYGSMDHESNRPGKMNPH. Over residues 180–194 the composition is skewed to basic and acidic residues; the sequence is SMDHESNRPGKMNPH. 3 disulfide bridges follow: C234/C308, C238/C312, and C249/C378. The NTR domain occupies 234–378; the sequence is CIAECHRDKD…KVLAAAHSKC (145 aa).

The protein belongs to the UPF0450 family.

In Xenopus laevis (African clawed frog), this protein is UPF0450 protein C17orf58 homolog.